Reading from the N-terminus, the 351-residue chain is Lipoyl synthase, mitochondrial (351 aa).

7 residues coordinate [4Fe-4S] cluster: Cys84, Cys89, Cys95, Cys115, Cys119, Cys122, and Ser330. One can recognise a Radical SAM core domain in the interval Asp100–Leu319.

Belongs to the radical SAM superfamily. Lipoyl synthase family. Requires [4Fe-4S] cluster as cofactor.

The protein resides in the mitochondrion. The catalysed reaction is [[Fe-S] cluster scaffold protein carrying a second [4Fe-4S](2+) cluster] + N(6)-octanoyl-L-lysyl-[protein] + 2 oxidized [2Fe-2S]-[ferredoxin] + 2 S-adenosyl-L-methionine + 4 H(+) = [[Fe-S] cluster scaffold protein] + N(6)-[(R)-dihydrolipoyl]-L-lysyl-[protein] + 4 Fe(3+) + 2 hydrogen sulfide + 2 5'-deoxyadenosine + 2 L-methionine + 2 reduced [2Fe-2S]-[ferredoxin]. It functions in the pathway protein modification; protein lipoylation via endogenous pathway; protein N(6)-(lipoyl)lysine from octanoyl-[acyl-carrier-protein]: step 2/2. In terms of biological role, catalyzes the radical-mediated insertion of two sulfur atoms into the C-6 and C-8 positions of the octanoyl moiety bound to the lipoyl domains of lipoate-dependent enzymes, thereby converting the octanoylated domains into lipoylated derivatives. The chain is Lipoyl synthase, mitochondrial from Yarrowia lipolytica (strain CLIB 122 / E 150) (Yeast).